The following is a 403-amino-acid chain: Exodeoxyribonuclease 7 large subunit (403 aa).

It belongs to the XseA family. In terms of assembly, heterooligomer composed of large and small subunits.

It is found in the cytoplasm. The catalysed reaction is Exonucleolytic cleavage in either 5'- to 3'- or 3'- to 5'-direction to yield nucleoside 5'-phosphates.. Functionally, bidirectionally degrades single-stranded DNA into large acid-insoluble oligonucleotides, which are then degraded further into small acid-soluble oligonucleotides. In Streptomyces griseus subsp. griseus (strain JCM 4626 / CBS 651.72 / NBRC 13350 / KCC S-0626 / ISP 5235), this protein is Exodeoxyribonuclease 7 large subunit.